Consider the following 330-residue polypeptide: Serine/threonine-protein phosphatase beta isoform (330 aa).

Mn(2+)-binding residues include Asp-63, His-65, Asp-91, and Asn-123. The active-site Proton donor is His-124. His-172 and His-247 together coordinate Mn(2+). Residues 308 to 319 (GMNSSRPTTPQR) are compositionally biased toward polar residues. Residues 308–330 (GMNSSRPTTPQRSAPMLATNKKK) form a disordered region. Phosphothreonine occurs at positions 315 and 316.

Belongs to the PPP phosphatase family. PP-1 subfamily. As to quaternary structure, interacts with Nop17l. Interacts with uri; uri inhibits flw phosphatase activity. The cofactor is Mn(2+).

The catalysed reaction is O-phospho-L-seryl-[protein] + H2O = L-seryl-[protein] + phosphate. It catalyses the reaction O-phospho-L-threonyl-[protein] + H2O = L-threonyl-[protein] + phosphate. Functionally, required for cell adhesion in non-muscle tissues and in maintenance of muscle attachment. Vital for larval development. The chain is Serine/threonine-protein phosphatase beta isoform (flw) from Drosophila melanogaster (Fruit fly).